Consider the following 458-residue polypeptide: 5'-adenylylsulfate reductase 3, chloroplastic (458 aa).

Residues 1–24 (MALAINVSSSSSSAISSSSFPSSD) form a disordered region. Residues 1-69 (MALAINVSSS…VQSITKESIV (69 aa)) constitute a chloroplast transit peptide. Residues 8–23 (SSSSSSAISSSSFPSS) are compositionally biased toward low complexity. Positions 70–319 (ASEVTEKLDV…KAKECGLHKG (250 aa)) are reductase domain. The Thioredoxin domain occupies 337 to 458 (ASVADIFNSE…SLTSFLNLVR (122 aa)). Catalysis depends on nucleophile residues cysteine 378 and cysteine 381. Cysteine 378 and cysteine 381 are oxidised to a cystine.

This sequence belongs to the APS reductase family. [4Fe-4S] cluster is required as a cofactor. As to expression, leaves, roots and stem.

The protein resides in the plastid. It localises to the chloroplast. It carries out the reaction glutathione disulfide + sulfite + AMP + 2 H(+) = adenosine 5'-phosphosulfate + 2 glutathione. Stimulated by sodium sulfate &gt; ammonium sulfate. Functionally, reduces sulfate for Cys biosynthesis. Substrate preference is adenosine-5'-phosphosulfate (APS) &gt;&gt; 3'-phosphoadenosine-5'-phosphosulfate (PAPS). Uses glutathione or DTT as source of protons. The chain is 5'-adenylylsulfate reductase 3, chloroplastic (APR3) from Arabidopsis thaliana (Mouse-ear cress).